Here is a 542-residue protein sequence, read N- to C-terminus: Chaperonin GroEL (542 aa).

ATP is bound by residues 29 to 32 (TLGP), 86 to 90 (DGTTT), Gly-413, 476 to 478 (NAA), and Asp-492. A disordered region spans residues 522 to 542 (PDENGPAAVPDMGMGGMGGMM).

This sequence belongs to the chaperonin (HSP60) family. In terms of assembly, forms a cylinder of 14 subunits composed of two heptameric rings stacked back-to-back. Interacts with the co-chaperonin GroES.

The protein resides in the cytoplasm. The catalysed reaction is ATP + H2O + a folded polypeptide = ADP + phosphate + an unfolded polypeptide.. In terms of biological role, together with its co-chaperonin GroES, plays an essential role in assisting protein folding. The GroEL-GroES system forms a nano-cage that allows encapsulation of the non-native substrate proteins and provides a physical environment optimized to promote and accelerate protein folding. The polypeptide is Chaperonin GroEL (Listeria monocytogenes serotype 4b (strain CLIP80459)).